We begin with the raw amino-acid sequence, 557 residues long: Glutamine--tRNA ligase (557 aa).

Residues proline 42 to histidine 52 carry the 'HIGH' region motif. ATP-binding positions include glutamate 43–asparagine 45 and histidine 49–serine 55. Residues aspartate 75 and tyrosine 220 each contribute to the L-glutamine site. Residues threonine 239 and arginine 270–leucine 271 each bind ATP. The short motif at leucine 277–arginine 281 is the 'KMSKS' region element.

This sequence belongs to the class-I aminoacyl-tRNA synthetase family. Monomer.

The protein resides in the cytoplasm. The catalysed reaction is tRNA(Gln) + L-glutamine + ATP = L-glutaminyl-tRNA(Gln) + AMP + diphosphate. This Haemophilus influenzae (strain ATCC 51907 / DSM 11121 / KW20 / Rd) protein is Glutamine--tRNA ligase.